An 810-amino-acid chain; its full sequence is Hemoglobin-haptoglobin utilization protein B (810 aa).

The N-terminal stretch at Met-1–Ala-22 is a signal peptide. Residues Asn-34–Lys-166 enclose the TBDR plug domain. The 636-residue stretch at Asp-175–Phe-810 folds into the TBDR beta-barrel domain. The TonB C-terminal box motif lies at Gln-793–Phe-810.

Belongs to the TonB-dependent receptor family.

The protein localises to the cell outer membrane. Functionally, acts as a receptor for hemoglobin or the hemoglobin/haptoglobin complex and is required for heme uptake. The sequence is that of Hemoglobin-haptoglobin utilization protein B (hpuB) from Neisseria meningitidis serogroup A / serotype 4A (strain DSM 15465 / Z2491).